Reading from the N-terminus, the 224-residue chain is Peptidyl-prolyl cis-trans isomerase FKBP3 (224 aa).

A2 is modified (N-acetylalanine). S36 carries the phosphoserine modification. The segment covering 89–102 has biased composition (basic and acidic residues); that stretch reads KLNEDKPKETKSEE. Residues 89 to 113 are disordered; the sequence is KLNEDKPKETKSEETLDEGPPKYTK. Position 99 is an N6-acetyllysine (K99). One can recognise a PPIase FKBP-type domain in the interval 128-224; it reads GDVVHCWYTG…IFEVELVDID (97 aa). S152 carries the phosphoserine modification. At K170 the chain carries N6-acetyllysine.

Belongs to the FKBP-type PPIase family.

Its subcellular location is the nucleus. It carries out the reaction [protein]-peptidylproline (omega=180) = [protein]-peptidylproline (omega=0). Its activity is regulated as follows. Inhibited preferentially by rapamycin over FK506. In terms of biological role, FK506- and rapamycin-binding proteins (FKBPs) constitute a family of receptors for the two immunosuppressants which inhibit T-cell proliferation by arresting two dinstinct cytoplasmic signal transmission pathways. PPIases accelerate the folding of proteins. This Bos taurus (Bovine) protein is Peptidyl-prolyl cis-trans isomerase FKBP3 (FKBP3).